A 102-amino-acid chain; its full sequence is Large ribosomal subunit protein bL21 (102 aa).

Belongs to the bacterial ribosomal protein bL21 family. As to quaternary structure, part of the 50S ribosomal subunit. Contacts protein L20.

Its function is as follows. This protein binds to 23S rRNA in the presence of protein L20. This Geobacter metallireducens (strain ATCC 53774 / DSM 7210 / GS-15) protein is Large ribosomal subunit protein bL21.